A 1393-amino-acid chain; its full sequence is DNA-directed RNA polymerase subunit beta'' (1393 aa).

Zn(2+) is bound by residues C224, C295, C302, and C305.

The protein belongs to the RNA polymerase beta' chain family. RpoC2 subfamily. As to quaternary structure, in plastids the minimal PEP RNA polymerase catalytic core is composed of four subunits: alpha, beta, beta', and beta''. When a (nuclear-encoded) sigma factor is associated with the core the holoenzyme is formed, which can initiate transcription. Requires Zn(2+) as cofactor.

The protein resides in the plastid. It is found in the chloroplast. It catalyses the reaction RNA(n) + a ribonucleoside 5'-triphosphate = RNA(n+1) + diphosphate. In terms of biological role, DNA-dependent RNA polymerase catalyzes the transcription of DNA into RNA using the four ribonucleoside triphosphates as substrates. The polypeptide is DNA-directed RNA polymerase subunit beta'' (Manihot esculenta (Cassava)).